The sequence spans 83 residues: Defensin-2 (83 aa).

A signal peptide spans 1 to 33; that stretch reads MAGKGVGTPLSALFLLVLLVVTIGMMEVQVAEG. Cystine bridges form between Cys36/Cys82, Cys47/Cys67, Cys53/Cys76, and Cys57/Cys78.

The protein belongs to the DEFL family.

The protein localises to the secreted. Plant defense peptide. Has antifungal activity. In Pinus sylvestris (Scotch pine), this protein is Defensin-2.